The sequence spans 534 residues: Calcium uptake protein 1 homolog, mitochondrial (534 aa).

Residues 1-32 (MLHCSFLRVIPIKNASKRLIIVRSLTSAPAKT) constitute a mitochondrion transit peptide. Residues 131–150 (PEASQKEEVTESNGEVEEVK) are disordered. 3 EF-hand domains span residues 271-306 (TSHA…IMSQ), 338-359 (KDGK…LQHD), and 466-501 (LSDH…RMRR). Residues Asp284, Asp286, Asn288, and Glu295 each contribute to the Ca(2+) site.

This sequence belongs to the MICU1 family. MICU1 subfamily. In terms of tissue distribution, expressed at low levels in PLM touch receptor neurons, germ cells, epidermis, and muscles.

The protein localises to the mitochondrion intermembrane space. It is found in the mitochondrion inner membrane. Calcium sensor of the mitochondrial calcium uniporter (mcu-1) channel, which senses calcium level via its EF-hand domains. At low calcium levels, micu-1 occludes the pore of the mcu-1 channel, preventing mitochondrial calcium uptake. At higher calcium levels, calcium-binding to micu-1 induces a conformational change that weakens mcu-1-micu-1 interactions and moves micu-1 away from the pore, allowing calcium permeation through the mcu-1 channel. Also required to protect against manganese toxicity by preventing manganese uptake by mcu-1. Modulates the activity of the mitochondrial calcium uniporter protein mcu-1 depending on the level of intracellular calcium in PLM touch receptor neurons following axonal injury. The polypeptide is Calcium uptake protein 1 homolog, mitochondrial (Caenorhabditis elegans).